The primary structure comprises 523 residues: NADH-ubiquinone oxidoreductase chain 2 (523 aa).

Helical transmembrane passes span 3–23 (LFGV…IPAI), 30–50 (IILL…NNIG), 62–82 (VTTI…LVLL), 110–130 (SVLA…SSLI), 135–155 (LISM…LATI), 170–190 (FLLG…LYSF), 212–232 (IEIS…AAPF), 246–266 (VVTT…ILEF), 281–301 (LLLI…LAQY), 306–326 (LLTY…AINN), 333–353 (FLFY…ILVA), 386–406 (GLSL…VGFF), 419–439 (GNFF…AYYL), and 490–510 (LVIA…TPLL).

This sequence belongs to the complex I subunit 2 family.

The protein localises to the mitochondrion inner membrane. The enzyme catalyses a ubiquinone + NADH + 5 H(+)(in) = a ubiquinol + NAD(+) + 4 H(+)(out). Core subunit of the mitochondrial membrane respiratory chain NADH dehydrogenase (Complex I) that is believed to belong to the minimal assembly required for catalysis. Complex I functions in the transfer of electrons from NADH to the respiratory chain. The immediate electron acceptor for the enzyme is believed to be ubiquinone. The chain is NADH-ubiquinone oxidoreductase chain 2 from Rhizopus oryzae (Mucormycosis agent).